Reading from the N-terminus, the 1031-residue chain is Protein translocase subunit SecA (1031 aa).

Residues Gln-143, Gly-161–Thr-165, and Asp-662 each bind ATP. Zn(2+) is bound by residues Cys-1015, Cys-1017, Cys-1026, and Cys-1027.

Belongs to the SecA family. In terms of assembly, monomer and homodimer. Part of the essential Sec protein translocation apparatus which comprises SecA, SecYEG and auxiliary proteins SecDF. Other proteins may also be involved. It depends on Zn(2+) as a cofactor.

The protein resides in the cell inner membrane. It localises to the cytoplasm. It catalyses the reaction ATP + H2O + cellular proteinSide 1 = ADP + phosphate + cellular proteinSide 2.. Functionally, part of the Sec protein translocase complex. Interacts with the SecYEG preprotein conducting channel. Has a central role in coupling the hydrolysis of ATP to the transfer of proteins into and across the cell membrane, serving as an ATP-driven molecular motor driving the stepwise translocation of polypeptide chains across the membrane. This Chlorobaculum tepidum (strain ATCC 49652 / DSM 12025 / NBRC 103806 / TLS) (Chlorobium tepidum) protein is Protein translocase subunit SecA.